Consider the following 1544-residue polypeptide: Lysine-specific demethylase 5B (1544 aa).

Positions 1-14 (MEPATTLPPGPRPA) are enriched in pro residues. The interval 1–22 (MEPATTLPPGPRPALPLGGPGP) is disordered. Residues 32-73 (CPVFEPSWEEFADPFAFIHKIRPIAEQTGICKVRPPPDWQPP) form the JmjN domain. Residues 97-187 (TRVKLNFLDQ…ILNPYNLFLS (91 aa)) enclose the ARID domain. Glycyl lysine isopeptide (Lys-Gly) (interchain with G-Cter in SUMO2) cross-links involve residues Lys148, Lys204, Lys209, Lys242, Lys274, and Lys278. The tract at residues 200–228 (TSDTKDKEYKPHDIPQRQSVQPAETCPPA) is disordered. Over residues 202-214 (DTKDKEYKPHDIP) the composition is skewed to basic and acidic residues. The segment at 269 to 297 (NEKEMKSTIKQEPTEKKDCELESEKEKPK) is disordered. The PHD-type 1 zinc-finger motif lies at 309 to 359 (LYVCLLCGSGNDEDRLLLCDGCDDSYHTFCLVPPLHDVPKGDWRCPKCLAQ). Position 425 (Tyr425) interacts with 2-oxoglutarate. Residues 453–619 (EYLDSGWNLN…LGRQCVEHYR (167 aa)) form the JmjC domain. His499 and Glu501 together coordinate Fe cation. The 2-oxoglutarate site is built by Ser507, Asn509, and Lys517. Fe cation is bound at residue His587. A C5HC2 zinc finger spans residues 692-744 (CIKCKTTCFMSAISCSCKPGLLVCLHHVKELCSCPPYKYNLRYRYTLDDLYPM). Lys769 is covalently cross-linked (Glycyl lysine isopeptide (Lys-Gly) (interchain with G-Cter in SUMO2)). Lys832 carries the post-translational modification N6-acetyllysine. Ser986 is modified (phosphoserine). The PHD-type 2 zinc-finger motif lies at 1176 to 1224 (MKVCLCQKTPATPMIQCELCRDAFHTSCVAAPSISQSSRIWLCPHCRRS). Polar residues predominate over residues 1297 to 1314 (QASATDKVSQPPGTTSFS). A disordered region spans residues 1297–1318 (QASATDKVSQPPGTTSFSLPDD). Ser1328 carries the post-translational modification Phosphoserine. Polar residues predominate over residues 1374-1388 (PSSVQQADRSSPVRS). Residues 1374 to 1447 (PSSVQQADRS…IKLSHPKDMD (74 aa)) are disordered. Residues 1389–1427 (SSEKNDCLRGKRDAINSPERKLKRRPEREGLPSERWDRV) are compositionally biased toward basic and acidic residues. Positions 1428-1441 (KHMRTPQKKKIKLS) are enriched in basic residues. Lys1450 is covalently cross-linked (Glycyl lysine isopeptide (Lys-Gly) (interchain with G-Cter in SUMO2)). Ser1456 bears the Phosphoserine mark. Residues 1484–1538 (DAICPAVSCLQPEGDEVDWVQCDGSCNQWFHQVCVGVSPEMAEKEDYICVRCTGK) form a PHD-type 3 zinc finger.

This sequence belongs to the JARID1 histone demethylase family. In terms of assembly, interacts with FOXG1B, PAX9, MYC, MYCN and RB1. Interacts with HDAC1, HDAC4, HDAC5 and HDAC7. Interacts (via PHD-type 1 zinc finger) with histone H3 unmodified at 'Lys-4'; the interaction is inhibited when histone H3 is methylated at 'Arg-2' or 'Lys-4'. The cofactor is Fe(2+). Present at highest levels in testis, where it is enriched in spermatogonia and pachytene cells (at protein level).

The protein localises to the nucleus. It carries out the reaction N(6),N(6),N(6)-trimethyl-L-lysyl(4)-[histone H3] + 3 2-oxoglutarate + 3 O2 = L-lysyl(4)-[histone H3] + 3 formaldehyde + 3 succinate + 3 CO2. Its function is as follows. Histone demethylase that demethylates 'Lys-4' of histone H3, thereby playing a central role in histone code. Does not demethylate histone H3 'Lys-9' or H3 'Lys-27'. Demethylates trimethylated, dimethylated and monomethylated H3 'Lys-4'. Acts as a transcriptional corepressor for FOXG1B and PAX9. Represses the CLOCK-BMAL1 heterodimer-mediated transcriptional activation of the core clock component PER2. The sequence is that of Lysine-specific demethylase 5B (Kdm5b) from Mus musculus (Mouse).